The chain runs to 425 residues: MTATSPRLKHEVKDLALAPLGRQRIEWAGREMPVLRQIRDRFAQEKPFAGLRLVACAHITTETAHLAIALKAGGADAVLIASNPLSTQDDVAASLVLDHEIPVFAQKGEDNATYNRHVQIALDHRPNIIIDDGSDVVATLVQERQHQIADLIGTTEETTTGIVRLRAMFKDGVLTFPAVNVNDADTKHFFDNRYGTGQSTLDGIIRATNILLAGKNVVVVGYGWCGKGTALRARGMGANVIVTEIDPIKAIEAVMDGFRVLPMAEAAPQGDIFITVTGNKHVVRGEHFDVMKDGAIVCNSGHFDLELDLKYLAANAKEIKEVRPFTEEYKLTNGKSVVVLGQGRLINLAAAEGHPSAVMDMSFANQALACEYLVKNKGKLAPGLHSIPVEVDQEIARLKLQAMGIYIDSLTPEQIEYINSWTSGT.

Substrate is bound by residues Thr60, Asp132, and Glu157. Residue 158-160 participates in NAD(+) binding; that stretch reads TTT. Substrate-binding residues include Lys187 and Asp191. Residues Asn192, 221–226, Glu244, Asn279, 300–302, and Asn347 each bind NAD(+); these read GYGWCG and SGH.

The protein belongs to the adenosylhomocysteinase family. NAD(+) serves as cofactor.

It localises to the cytoplasm. It carries out the reaction S-adenosyl-L-homocysteine + H2O = L-homocysteine + adenosine. The protein operates within amino-acid biosynthesis; L-homocysteine biosynthesis; L-homocysteine from S-adenosyl-L-homocysteine: step 1/1. Its function is as follows. May play a key role in the regulation of the intracellular concentration of adenosylhomocysteine. The chain is Adenosylhomocysteinase from Nostoc sp. (strain PCC 7120 / SAG 25.82 / UTEX 2576).